Here is a 171-residue protein sequence, read N- to C-terminus: Translation initiation factor IF-3 (171 aa).

Belongs to the IF-3 family. As to quaternary structure, monomer.

It localises to the cytoplasm. IF-3 binds to the 30S ribosomal subunit and shifts the equilibrium between 70S ribosomes and their 50S and 30S subunits in favor of the free subunits, thus enhancing the availability of 30S subunits on which protein synthesis initiation begins. This is Translation initiation factor IF-3 from Listeria innocua serovar 6a (strain ATCC BAA-680 / CLIP 11262).